The following is a 321-amino-acid chain: Malate dehydrogenase (321 aa).

NAD(+) is bound by residues 11-16 (GSGNIG) and aspartate 35. 2 residues coordinate substrate: arginine 84 and arginine 90. NAD(+) contacts are provided by residues asparagine 97 and 120–122 (ITN). 2 residues coordinate substrate: asparagine 122 and arginine 153. Histidine 177 (proton acceptor) is an active-site residue.

It belongs to the LDH/MDH superfamily. MDH type 3 family.

It catalyses the reaction (S)-malate + NAD(+) = oxaloacetate + NADH + H(+). Functionally, catalyzes the reversible oxidation of malate to oxaloacetate. The chain is Malate dehydrogenase from Rickettsia peacockii (strain Rustic).